A 391-amino-acid polypeptide reads, in one-letter code: Cyclin-A1 (391 aa).

It belongs to the cyclin family. Cyclin AB subfamily. In terms of assembly, interacts with the CDK1 and the CDK2 protein kinases to form a serine/threonine kinase holoenzyme complex. The cyclin subunit imparts substrate specificity to the complex.

Its subcellular location is the nucleus. Functionally, may be involved in the control of the cell cycle at the G1/S (start) and G2/M (mitosis) transitions. This chain is Cyclin-A1 (ccna1), found in Carassius auratus (Goldfish).